We begin with the raw amino-acid sequence, 185 residues long: Ribosome-recycling factor (185 aa).

The protein belongs to the RRF family.

Its subcellular location is the cytoplasm. Responsible for the release of ribosomes from messenger RNA at the termination of protein biosynthesis. May increase the efficiency of translation by recycling ribosomes from one round of translation to another. The sequence is that of Ribosome-recycling factor from Aliivibrio fischeri (strain MJ11) (Vibrio fischeri).